A 245-amino-acid polypeptide reads, in one-letter code: Eukaryotic translation initiation factor 6 (245 aa).

Tyr113 is subject to Phosphotyrosine. A Phosphothreonine modification is found at Thr165. Ser166 is modified (phosphoserine). 2 positions are modified to phosphoserine; by CK1: Ser174 and Ser175. A Phosphoserine; by PKC modification is found at Ser235. Phosphoserine occurs at positions 239 and 243.

It belongs to the eIF-6 family. Monomer. Associates with the 60S ribosomal subunit. Interacts with RACK1. Interacts with DICER1, AGO2, TARBP2, MOV10 and RPL7A; they form a large RNA-induced silencing complex (RISC). Post-translationally, phosphorylation at Ser-174 and Ser-175 by CSNK1D/CK1 promotes nuclear export. In terms of processing, ufmylated by UFL1.

It localises to the cytoplasm. The protein localises to the nucleus. It is found in the nucleolus. Functionally, binds to the 60S ribosomal subunit and prevents its association with the 40S ribosomal subunit to form the 80S initiation complex in the cytoplasm. Behaves as a stimulatory translation initiation factor downstream insulin/growth factors. Is also involved in ribosome biogenesis. Associates with pre-60S subunits in the nucleus and is involved in its nuclear export. Cytoplasmic release of TIF6 from 60S subunits and nuclear relocalization is promoted by a RACK1 (RACK1)-dependent protein kinase C activity. In tissues responsive to insulin, controls fatty acid synthesis and glycolysis by exerting translational control of adipogenic transcription factors such as CEBPB, CEBPD and ATF4 that have G/C rich or uORF in their 5'UTR. Required for ROS-dependent megakaryocyte maturation and platelets formation, controls the expression of mitochondrial respiratory chain genes involved in reactive oxygen species (ROS) synthesis. Involved in miRNA-mediated gene silencing by the RNA-induced silencing complex (RISC). Required for both miRNA-mediated translational repression and miRNA-mediated cleavage of complementary mRNAs by RISC. Modulates cell cycle progression and global translation of pre-B cells, its activation seems to be rate-limiting in tumorigenesis and tumor growth. The sequence is that of Eukaryotic translation initiation factor 6 (Eif6) from Rattus norvegicus (Rat).